A 169-amino-acid chain; its full sequence is Disulfide bond formation protein B (169 aa).

The Cytoplasmic portion of the chain corresponds to 1–14; sequence MNNLTLSLHRERRL. A helical transmembrane segment spans residues 15 to 31; that stretch reads LVLLGLVCLALLAGALY. The Periplasmic segment spans residues 32-49; it reads LQYVKNEDPCPLCIIQRY. A disulfide bridge links cysteine 41 with cysteine 44. The helical transmembrane segment at 50 to 64 threads the bilayer; that stretch reads FFVLIAVFAFIGAGM. Residues 65–71 are Cytoplasmic-facing; that stretch reads ASGAGIA. A helical transmembrane segment spans residues 72–89; it reads VIEALIVLSAAAGVGTAA. Topologically, residues 90–144 are periplasmic; it reads RHLYVQLNPGFSCGFDALQPVVDSLPPAHWLPGVFKVAGLCETVYPPIFGILLPG. Residues cysteine 102 and cysteine 130 are joined by a disulfide bond. The chain crosses the membrane as a helical span at residues 145-163; the sequence is WALIAFALIVVPVAASLLR. The Cytoplasmic portion of the chain corresponds to 164–169; sequence HRGRLR.

This sequence belongs to the DsbB family.

Its subcellular location is the cell inner membrane. In terms of biological role, required for disulfide bond formation in some periplasmic proteins. Acts by oxidizing the DsbA protein. This chain is Disulfide bond formation protein B, found in Burkholderia thailandensis (strain ATCC 700388 / DSM 13276 / CCUG 48851 / CIP 106301 / E264).